Reading from the N-terminus, the 434-residue chain is Maintenance of mitochondrial morphology protein 1 (434 aa).

Topologically, residues 1-105 are lumenal; that stretch reads MEMSELLASE…SFSSQSFAEG (105 aa). A helical membrane pass occupies residues 106-126; sequence LIVGQLSVIVALIFVIKFFVF. The Cytoplasmic portion of the chain corresponds to 127-434; the sequence is SEGGTKTATA…DDSVSVKSND (308 aa). The 215-residue stretch at 194-408 folds into the SMP-LTD domain; that stretch reads SPESLDWFNV…EPRFQFVKLP (215 aa). The interval 415–434 is disordered; sequence KNTRKEKTDTDDSVSVKSND.

Belongs to the MMM1 family. In terms of assembly, homodimer. Component of the ER-mitochondria encounter structure (ERMES) or MDM complex, composed of MMM1, MDM10, MDM12 and MDM34. An MMM1 homodimer associates with one molecule of MDM12 on each side in a pairwise head-to-tail manner, and the SMP-LTD domains of MMM1 and MDM12 generate a continuous hydrophobic tunnel for phospholipid trafficking.

Its subcellular location is the endoplasmic reticulum membrane. Functionally, component of the ERMES/MDM complex, which serves as a molecular tether to connect the endoplasmic reticulum (ER) and mitochondria. Components of this complex are involved in the control of mitochondrial shape and protein biogenesis, and function in nonvesicular lipid trafficking between the ER and mitochondria. The MDM12-MMM1 subcomplex functions in the major beta-barrel assembly pathway that is responsible for biogenesis of all outer membrane beta-barrel proteins, and acts in a late step after the SAM complex. The MDM10-MDM12-MMM1 subcomplex further acts in the TOM40-specific pathway after the action of the MDM12-MMM1 complex. Essential for establishing and maintaining the structure of mitochondria and maintenance of mtDNA nucleoids. This chain is Maintenance of mitochondrial morphology protein 1, found in Kluyveromyces lactis (strain ATCC 8585 / CBS 2359 / DSM 70799 / NBRC 1267 / NRRL Y-1140 / WM37) (Yeast).